Reading from the N-terminus, the 587-residue chain is MNHKLKPTVGLGYCLLCAALCLLLLRDVAIAGSGEEPSGVREARSVGTQVAVQPVDCVQSEWSSWTRCDVCRKKRYRYAKLVQPSQFGGEPCHVQGKEVEPCSPPSRYDCTHDETPLCEGFLCTYTGRCVPIDLRCNGDDDCGDWSAEKGSPKVPKACKQEAQEYHGIENLAKGINILHSHLEGSVIDNRYYAGSCLPHYIQDVRFRKPYNLQQYTLETKGTYDFKLQSFESYSEFVHYTMTERSSKTTVSIGFALPGVAEFGFNYADSKYSKSEKKIRRASRKENSFVQAKAELQLARYILKSEDLMLHPEFFLRLRALPQSYNYGEYRQIYRDYGTHYITEATLGGDYEYTVILDKEKLEKTGYSLEAYKNCEQIVLKVGANIKGVYVTVGLEGGGCDGLLNEMGEDTVKGSMVEDYVAVVSGGDSESITWLAAKNLPTPPLMRLWGEAVHYNLDFIRSVTRPLYELVTARDFSSANSLKKNLRRALAEYLEESSSCRCAPCRNNGLAVLKGTRCECVCPSGYSGLGCEITQRPDIGIDGSWSCWGSWSPCRGRSKTRSRQCNNPAPSSGGIACRGLQMETTDCF.

The N-terminal stretch at Met-1–Ala-31 is a signal peptide. The propeptide occupies Gly-32–Arg-44. The TSP type-1 1 domain occupies Asp-56–Thr-111. Cystine bridges form between Cys-57–Cys-92, Cys-68–Cys-102, Cys-71–Cys-110, Cys-118–Cys-129, and Cys-123–Cys-142. C-linked (Man) tryptophan glycans are attached at residues Trp-62 and Trp-65. One can recognise an LDL-receptor class A domain in the interval Leu-117–Lys-159. Ca(2+) is bound by residues Leu-134, Asn-137, Asp-139, Asp-141, and Glu-148. Positions Val-154 to Arg-500 constitute an MACPF domain. Cysteines 158 and 196 form a disulfide. The next 4 beta stranded transmembrane spans lie at Thr-248–Ala-255, Gly-258–Asn-265, Glu-375–Gly-382, and Val-388–Glu-395. 5 cysteine pairs are disulfide-bonded: Cys-374–Cys-399, Cys-499–Cys-546, Cys-501–Cys-517, Cys-504–Cys-519, and Cys-521–Cys-530. The EGF-like domain occupies Cys-501–Glu-531. A TSP type-1 2 domain is found at Asp-541 to Phe-587. Trp-547 and Trp-550 each carry a C-linked (Man) tryptophan glycan. The cysteines at positions 553 and 586 are disulfide-linked.

This sequence belongs to the complement C6/C7/C8/C9 family. As to quaternary structure, heterotrimer of 3 chains: alpha (C8A), beta (C8B) and gamma (C8G); the alpha and gamma chains are disulfide bonded. Component of the membrane attack complex (MAC), composed of complement C5b, C6, C7, C8A, C8B, C8G and multiple copies of the pore-forming subunit C9.

It is found in the secreted. Its subcellular location is the target cell membrane. Its function is as follows. Component of the membrane attack complex (MAC), a multiprotein complex activated by the complement cascade, which inserts into a target cell membrane and forms a pore, leading to target cell membrane rupture and cell lysis. The MAC is initiated by proteolytic cleavage of C5 into complement C5b in response to the classical, alternative, lectin and GZMK complement pathways. The complement pathways consist in a cascade of proteins that leads to phagocytosis and breakdown of pathogens and signaling that strengthens the adaptive immune system. C8B, together with C8A and C8G, inserts into the target membrane, but does not form pores by itself. During MAC assembly, associates with C5b, C6 and C7 to form the C5b8 intermediate complex that inserts into the target membrane and traverses the bilayer increasing membrane rigidity. In Oncorhynchus mykiss (Rainbow trout), this protein is Complement component C8 beta chain (c8b).